The following is a 1044-amino-acid chain: Isoleucine--tRNA ligase (1044 aa).

Positions 48–58 match the 'HIGH' region motif; the sequence is PFATGLPHFGH. The 'KMSKS' region motif lies at 594–598; it reads KMSKS. Position 597 (Lys-597) interacts with ATP.

The protein belongs to the class-I aminoacyl-tRNA synthetase family. IleS type 2 subfamily. In terms of assembly, monomer. Requires Zn(2+) as cofactor.

The protein localises to the cytoplasm. The enzyme catalyses tRNA(Ile) + L-isoleucine + ATP = L-isoleucyl-tRNA(Ile) + AMP + diphosphate. Catalyzes the attachment of isoleucine to tRNA(Ile). As IleRS can inadvertently accommodate and process structurally similar amino acids such as valine, to avoid such errors it has two additional distinct tRNA(Ile)-dependent editing activities. One activity is designated as 'pretransfer' editing and involves the hydrolysis of activated Val-AMP. The other activity is designated 'posttransfer' editing and involves deacylation of mischarged Val-tRNA(Ile). The sequence is that of Isoleucine--tRNA ligase from Borrelia duttonii (strain Ly).